The primary structure comprises 506 residues: UPF0522 protein A (506 aa).

A signal peptide spans 1-18 (MIKSLLLLISIIIGIVIS). N-linked (GlcNAc...) asparagine glycosylation is found at asparagine 145, asparagine 155, asparagine 330, asparagine 366, asparagine 418, and asparagine 427.

This sequence belongs to the UPF0522 family.

It localises to the secreted. This chain is UPF0522 protein A, found in Dictyostelium discoideum (Social amoeba).